The sequence spans 437 residues: Elongation factor 1-gamma (437 aa).

Position 2 is an N-acetylalanine (Ala-2). The region spanning 2 to 87 is the GST N-terminal domain; the sequence is AAGTLYTYPE…YVSNEELRGS (86 aa). The GST C-terminal domain occupies 88-216; that stretch reads TPEAAAQVVQ…VKLCEKMAQF (129 aa). Lys-147 and Lys-212 each carry N6-acetyllysine. Residues 221-254 show a composition bias toward basic and acidic residues; that stretch reads FAESQPKKDTPRKEKGSREEKQKPQAERKEEKKA. Positions 221–268 are disordered; sequence FAESQPKKDTPRKEKGSREEKQKPQAERKEEKKAAAPAPEEEMDECEQ. Lys-253 participates in a covalent cross-link: Glycyl lysine isopeptide (Lys-Gly) (interchain with G-Cter in SUMO1). One can recognise an EF-1-gamma C-terminal domain in the interval 276 to 437; sequence AKDPFAHLPK…KAVNQGKIFK (162 aa). Lys-285 is covalently cross-linked (Glycyl lysine isopeptide (Lys-Gly) (interchain with G-Cter in SUMO2)). Lys-401 is subject to N6-acetyllysine. Residue Lys-434 is modified to N6-acetyllysine; alternate. Lys-434 bears the N6-malonyllysine; alternate mark.

EF-1 is composed of four subunits: alpha, beta, delta, and gamma.

Its function is as follows. Probably plays a role in anchoring the complex to other cellular components. The protein is Elongation factor 1-gamma (Eef1g) of Mus musculus (Mouse).